The primary structure comprises 224 residues: N6-methyladenosine RNA demethylase ALKBH (224 aa).

The Fe2OG dioxygenase domain occupies 93-222 (LAQAAIVNFY…RINLNVRQMR (130 aa)). Residues His-111, Asp-113, and His-178 each coordinate Fe cation. Residue Arg-213 coordinates 2-oxoglutarate.

This sequence belongs to the alkB family. Fe(2+) is required as a cofactor.

The enzyme catalyses an N(6)-methyladenosine in mRNA + 2-oxoglutarate + O2 = an adenosine in mRNA + formaldehyde + succinate + CO2. Functionally, RNA demethylase that regulates the stability of mRNAs through an m(6)A-dependent manner. M6A is a modification present at internal sites of mRNAs and some non-coding RNAs and plays a role in mRNA stability and processing. Demethylate m6A at position A1935 within the 3'UTR of transcription factor ZAP1 and plays an important role in C.parasitica development and virulence. Target mRNAs are primarily associated with amino-acid biosynthesis, 2-oxocarboxylic acid metabolism, and ABC transporters, as well as alpha-amino acid metabolism, small-molecule biosynthesis, and the sulfite reductase complex (NADPH). The chain is N6-methyladenosine RNA demethylase ALKBH from Cryphonectria parasitica (strain ATCC 38755 / EP155).